The following is a 351-amino-acid chain: UDP-3-O-acylglucosamine N-acyltransferase (351 aa).

His-240 acts as the Proton acceptor in catalysis.

It belongs to the transferase hexapeptide repeat family. LpxD subfamily. Homotrimer.

It catalyses the reaction a UDP-3-O-[(3R)-3-hydroxyacyl]-alpha-D-glucosamine + a (3R)-hydroxyacyl-[ACP] = a UDP-2-N,3-O-bis[(3R)-3-hydroxyacyl]-alpha-D-glucosamine + holo-[ACP] + H(+). Its pathway is bacterial outer membrane biogenesis; LPS lipid A biosynthesis. In terms of biological role, catalyzes the N-acylation of UDP-3-O-acylglucosamine using 3-hydroxyacyl-ACP as the acyl donor. Is involved in the biosynthesis of lipid A, a phosphorylated glycolipid that anchors the lipopolysaccharide to the outer membrane of the cell. The polypeptide is UDP-3-O-acylglucosamine N-acyltransferase (Pseudomonas fluorescens (strain SBW25)).